The chain runs to 154 residues: Superoxide dismutase [Cu-Zn] (154 aa).

3 residues coordinate Cu cation: His47, His49, and His64. A disulfide bridge links Cys58 with Cys147. Residues His64, His72, His81, and Asp84 each contribute to the Zn(2+) site. A Cu cation-binding site is contributed by His121. Substrate is bound at residue Arg144.

It belongs to the Cu-Zn superoxide dismutase family. As to quaternary structure, homodimer. Cu cation serves as cofactor. The cofactor is Zn(2+).

The protein resides in the cytoplasm. The enzyme catalyses 2 superoxide + 2 H(+) = H2O2 + O2. In terms of biological role, destroys radicals which are normally produced within the cells and which are toxic to biological systems. The sequence is that of Superoxide dismutase [Cu-Zn] (SOD1) from Eremothecium gossypii (strain ATCC 10895 / CBS 109.51 / FGSC 9923 / NRRL Y-1056) (Yeast).